We begin with the raw amino-acid sequence, 278 residues long: TnpB-like protein MJ0751 (278 aa).

Residues Cys222, Cys225, Cys239, and Cys242 each contribute to the Zn(2+) site.

The protein in the N-terminal section; belongs to the transposase 2 family. It in the C-terminal section; belongs to the transposase 35 family.

The protein is TnpB-like protein MJ0751 of Methanocaldococcus jannaschii (strain ATCC 43067 / DSM 2661 / JAL-1 / JCM 10045 / NBRC 100440) (Methanococcus jannaschii).